The sequence spans 118 residues: Large ribosomal subunit protein bL20 (118 aa).

Belongs to the bacterial ribosomal protein bL20 family.

Functionally, binds directly to 23S ribosomal RNA and is necessary for the in vitro assembly process of the 50S ribosomal subunit. It is not involved in the protein synthesizing functions of that subunit. In Shigella dysenteriae serotype 1 (strain Sd197), this protein is Large ribosomal subunit protein bL20.